Consider the following 239-residue polypeptide: Lysophospholipase-like protein 1 (239 aa).

The residue at position 2 (A2) is an N-acetylalanine. Active-site charge relay system residues include S125, D180, and H212.

The protein belongs to the AB hydrolase superfamily. AB hydrolase 2 family.

It is found in the cytoplasm. It localises to the cytosol. The enzyme catalyses S-hexadecanoyl-L-cysteinyl-[protein] + H2O = L-cysteinyl-[protein] + hexadecanoate + H(+). Palmitoyl thioesterase that catalyzes depalmitoylation of CGAS and KCNMA1. Acts as a regulator of innate immunity by mediating depalmitoylation of CGAS, thereby preventing CGAS homodimerization and cyclic GMP-AMP synthase activity. Does not exhibit phospholipase nor triacylglycerol lipase activity, able to hydrolyze only short chain substrates due to its shallow active site. This chain is Lysophospholipase-like protein 1, found in Mus musculus (Mouse).